The following is a 199-amino-acid chain: Heparin-binding hemagglutinin (199 aa).

The segment covering 162 to 180 has biased composition (low complexity); the sequence is KAAPAKKAAPAKKAAPAKK. The interval 162 to 199 is disordered; it reads KAAPAKKAAPAKKAAPAKKAAAKKAPAKKAAAKKVTQK. Residues 181–199 are compositionally biased toward basic residues; that stretch reads AAAKKAPAKKAAAKKVTQK.

To M.leprae HbhA. Glycosylated. Glycosylation may protect the protein from proteolytic degradation and be important for hemagglutination. It suggests that the carbohydrate moiety may be located within the C-terminal domain of HbhA.

Its subcellular location is the cell surface. In terms of biological role, required for extrapulmonary dissemination. Mediates adherence to epithelial cells by binding to sulfated glycoconjugates present at the surface of these cells. In Mycobacterium tuberculosis (strain CDC 1551 / Oshkosh), this protein is Heparin-binding hemagglutinin (hbhA).